Here is a 267-residue protein sequence, read N- to C-terminus: Protein LicA (267 aa).

It belongs to the peptidase S49 family.

In terms of biological role, mediates phase variation of the LPS epitopes. Phase variation of H.influenza LPS epitopes expressed by LicA is determined by a translational switch. This chain is Protein LicA (licA), found in Haemophilus influenzae (strain ATCC 51907 / DSM 11121 / KW20 / Rd).